Consider the following 237-residue polypeptide: rRNA-processing protein EFG1 (237 aa).

The disordered stretch occupies residues 1 to 24; sequence MPKTVKNPKNNKSRSRGAPIQVAE. 2 coiled-coil regions span residues 53–113 and 166–186; these read DKKI…ISQT and LKITEERRREFRKYIEKLMEE. The interval 206-237 is disordered; it reads NDKTQKAVLTEEIDAPEQKQDEQQEEQDDFFE. The segment covering 228–237 has biased composition (acidic residues); that stretch reads QQEEQDDFFE.

Belongs to the EFG1 family.

Its subcellular location is the nucleus. The protein resides in the nucleolus. Its function is as follows. Involved in rRNA processing. This chain is rRNA-processing protein EFG1, found in Candida albicans (strain SC5314 / ATCC MYA-2876) (Yeast).